The chain runs to 300 residues: Porphobilinogen deaminase (300 aa).

At cysteine 239 the chain carries S-(dipyrrolylmethanemethyl)cysteine.

The protein belongs to the HMBS family. In terms of assembly, monomer. The cofactor is dipyrromethane.

The enzyme catalyses 4 porphobilinogen + H2O = hydroxymethylbilane + 4 NH4(+). Its pathway is porphyrin-containing compound metabolism; protoporphyrin-IX biosynthesis; coproporphyrinogen-III from 5-aminolevulinate: step 2/4. Its function is as follows. Tetrapolymerization of the monopyrrole PBG into the hydroxymethylbilane pre-uroporphyrinogen in several discrete steps. The protein is Porphobilinogen deaminase of Francisella tularensis subsp. tularensis (strain WY96-3418).